Consider the following 252-residue polypeptide: 3-dehydroquinate dehydratase (252 aa).

3-dehydroquinate-binding positions include serine 21, 46–48 (EWR), and arginine 82. Histidine 143 functions as the Proton donor/acceptor in the catalytic mechanism. Lysine 170 functions as the Schiff-base intermediate with substrate in the catalytic mechanism. Arginine 213, serine 232, and glutamine 236 together coordinate 3-dehydroquinate.

The protein belongs to the type-I 3-dehydroquinase family. As to quaternary structure, homodimer.

The catalysed reaction is 3-dehydroquinate = 3-dehydroshikimate + H2O. It participates in metabolic intermediate biosynthesis; chorismate biosynthesis; chorismate from D-erythrose 4-phosphate and phosphoenolpyruvate: step 3/7. In terms of biological role, involved in the third step of the chorismate pathway, which leads to the biosynthesis of aromatic amino acids. Catalyzes the cis-dehydration of 3-dehydroquinate (DHQ) and introduces the first double bond of the aromatic ring to yield 3-dehydroshikimate. This chain is 3-dehydroquinate dehydratase, found in Salmonella agona (strain SL483).